Consider the following 360-residue polypeptide: Peptide chain release factor 1 (360 aa).

Gln-235 bears the N5-methylglutamine mark.

This sequence belongs to the prokaryotic/mitochondrial release factor family. Post-translationally, methylated by PrmC. Methylation increases the termination efficiency of RF1.

Its subcellular location is the cytoplasm. In terms of biological role, peptide chain release factor 1 directs the termination of translation in response to the peptide chain termination codons UAG and UAA. The sequence is that of Peptide chain release factor 1 from Mannheimia succiniciproducens (strain KCTC 0769BP / MBEL55E).